Here is a 491-residue protein sequence, read N- to C-terminus: Lysosomal Pro-X carboxypeptidase (491 aa).

An N-terminal signal peptide occupies residues 1–17 (MGCRALLLLSFLLLGAA). Positions 18 to 43 (TTIPPRLKTLGSPHLSASPTPDPAVA) are excised as a propeptide. A glycan (N-linked (GlcNAc...) asparagine) is linked at Asn99. Ser177 (charge relay system) is an active-site residue. The SKS domain stretch occupies residues 192–332 (HIVVGALAAS…QNIFQALSVY (141 aa)). 4 disulfides stabilise this stretch: Cys213–Cys370, Cys231–Cys308, Cys262–Cys341, and Cys362–Cys392. Residues Asn315, Asn334, and Asn343 are each glycosylated (N-linked (GlcNAc...) asparagine). N-linked (GlcNAc...) asparagine glycosylation is present at Asn413. Catalysis depends on charge relay system residues Asp428 and His453.

This sequence belongs to the peptidase S28 family. Homodimer.

Its subcellular location is the lysosome. The catalysed reaction is Cleavage of a -Pro-|-Xaa bond to release a C-terminal amino acid.. In terms of biological role, cleaves C-terminal amino acids linked to proline in peptides such as angiotensin II, III and des-Arg9-bradykinin. This cleavage occurs at acidic pH, but enzymatic activity is retained with some substrates at neutral pH. The sequence is that of Lysosomal Pro-X carboxypeptidase (Prcp) from Mus musculus (Mouse).